The primary structure comprises 506 residues: Thyroid hormone receptor alpha (506 aa).

Positions 1-32 (MEQKPSKVECGSDPEENSARSPDGKRKRKNGQ) are disordered. Residues 1-52 (MEQKPSKVECGSDPEENSARSPDGKRKRKNGQCSLKTSMSGYIPSYLDKDEQ) form a modulating region. Residues Cys-53, Cys-56, Cys-70, Cys-73, Cys-91, Cys-97, Cys-107, and Cys-110 each contribute to the Zn(2+) site. 2 consecutive NR C4-type zinc fingers follow at residues 53–73 (CVVC…CEGC) and 91–115 (CKYD…FKKC). A DNA-binding region (nuclear receptor) is located at residues 53–127 (CVVCGDKATG…VGMAMDLVLD (75 aa)). The NR LBD domain occupies 163–407 (EEWDLIHVAT…EGQQLLGMHV (245 aa)). Positions 228 and 277 each coordinate 3,3',5-triiodo-L-thyronine. The interval 460 to 506 (GEDDSSEAGSLTSSDEDPEVCEDAAQATQPLPEAPPRADGEGGGGGS) is disordered.

The protein belongs to the nuclear hormone receptor family. NR1 subfamily. As to quaternary structure, binds DNA as a dimer; homodimer and heterodimer with RXRB. Interacts with NCOA3 and NCOA6 coactivators, leading to a strong increase of transcription of target genes. Probably interacts with SFPQ. Interacts with C1D. Interacts with AKAP13. Interacts with TP53INP2. Interacts with PER2. Interacts with PER2. Isoform alpha-2 and isoform alpha-1 interact with TACC1, but the interaction with alpha-1 is weaker. The interaction with isoform alpha-1, but not alpha-2, is decreased in the presence of thyroid hormone T3.

It is found in the nucleus. The protein localises to the cytoplasm. Its function is as follows. Nuclear hormone receptor that can act as a repressor or activator of transcription. High affinity receptor for thyroid hormones, including triiodothyronine and thyroxine. This chain is Thyroid hormone receptor alpha (THRA), found in Sus scrofa (Pig).